Here is a 1380-residue protein sequence, read N- to C-terminus: DNA-directed RNA polymerase subunit beta (1380 aa).

Belongs to the RNA polymerase beta chain family. As to quaternary structure, the RNAP catalytic core consists of 2 alpha, 1 beta, 1 beta' and 1 omega subunit. When a sigma factor is associated with the core the holoenzyme is formed, which can initiate transcription.

The catalysed reaction is RNA(n) + a ribonucleoside 5'-triphosphate = RNA(n+1) + diphosphate. Functionally, DNA-dependent RNA polymerase catalyzes the transcription of DNA into RNA using the four ribonucleoside triphosphates as substrates. The sequence is that of DNA-directed RNA polymerase subunit beta from Sinorhizobium medicae (strain WSM419) (Ensifer medicae).